The chain runs to 429 residues: Gamma-glutamyl phosphate reductase (429 aa).

It belongs to the gamma-glutamyl phosphate reductase family.

Its subcellular location is the cytoplasm. The enzyme catalyses L-glutamate 5-semialdehyde + phosphate + NADP(+) = L-glutamyl 5-phosphate + NADPH + H(+). The protein operates within amino-acid biosynthesis; L-proline biosynthesis; L-glutamate 5-semialdehyde from L-glutamate: step 2/2. In terms of biological role, catalyzes the NADPH-dependent reduction of L-glutamate 5-phosphate into L-glutamate 5-semialdehyde and phosphate. The product spontaneously undergoes cyclization to form 1-pyrroline-5-carboxylate. The polypeptide is Gamma-glutamyl phosphate reductase (Bradyrhizobium sp. (strain BTAi1 / ATCC BAA-1182)).